A 249-amino-acid chain; its full sequence is Probable endopeptidase YafL (249 aa).

Positions 1-17 are cleaved as a signal peptide; it reads MSLPSIPSFVLSGLLLI. C18 carries N-palmitoyl cysteine lipidation. The S-diacylglycerol cysteine moiety is linked to residue C18. Residues 116 to 243 enclose the NlpC/P60 domain; it reads HNITEVAIHR…DHFLGARRIL (128 aa). The active-site Nucleophile is C147. The Proton acceptor role is filled by H202. The active site involves E214.

Belongs to the peptidase C40 family.

The protein localises to the cell membrane. The protein is Probable endopeptidase YafL (yafL) of Escherichia coli (strain K12).